The following is a 296-amino-acid chain: Nucleotide-binding protein Pnuc_1915 (296 aa).

8–15 (GISGSGKS) is an ATP binding site. 57 to 60 (DARR) is a binding site for GTP.

It belongs to the RapZ-like family.

Displays ATPase and GTPase activities. The chain is Nucleotide-binding protein Pnuc_1915 from Polynucleobacter asymbioticus (strain DSM 18221 / CIP 109841 / QLW-P1DMWA-1) (Polynucleobacter necessarius subsp. asymbioticus).